The sequence spans 361 residues: Probable dual-specificity RNA methyltransferase RlmN (361 aa).

Glu-91 acts as the Proton acceptor in catalysis. The Radical SAM core domain maps to 97–329 (QHYGLSVCVT…KKKGVNCVVR (233 aa)). Cys-104 and Cys-340 are disulfide-bonded. Positions 111, 115, and 118 each coordinate [4Fe-4S] cluster. S-adenosyl-L-methionine is bound by residues 163–164 (GE), Ser-195, 218–220 (SLH), and Asn-296. Residue Cys-340 is the S-methylcysteine intermediate of the active site.

Belongs to the radical SAM superfamily. RlmN family. It depends on [4Fe-4S] cluster as a cofactor.

It localises to the cytoplasm. It carries out the reaction adenosine(2503) in 23S rRNA + 2 reduced [2Fe-2S]-[ferredoxin] + 2 S-adenosyl-L-methionine = 2-methyladenosine(2503) in 23S rRNA + 5'-deoxyadenosine + L-methionine + 2 oxidized [2Fe-2S]-[ferredoxin] + S-adenosyl-L-homocysteine. The catalysed reaction is adenosine(37) in tRNA + 2 reduced [2Fe-2S]-[ferredoxin] + 2 S-adenosyl-L-methionine = 2-methyladenosine(37) in tRNA + 5'-deoxyadenosine + L-methionine + 2 oxidized [2Fe-2S]-[ferredoxin] + S-adenosyl-L-homocysteine. Its function is as follows. Specifically methylates position 2 of adenine 2503 in 23S rRNA and position 2 of adenine 37 in tRNAs. This chain is Probable dual-specificity RNA methyltransferase RlmN, found in Streptococcus pneumoniae serotype 4 (strain ATCC BAA-334 / TIGR4).